We begin with the raw amino-acid sequence, 282 residues long: Acetyl-coenzyme A carboxylase carboxyl transferase subunit beta (282 aa).

In terms of domain architecture, CoA carboxyltransferase N-terminal spans 28 to 282; sequence IMTKCPSCRT…TKILDIHHVS (255 aa). Positions 32, 35, 51, and 54 each coordinate Zn(2+). The C4-type zinc finger occupies 32–54; the sequence is CPSCRTIMYTKELKKNLYVCDSC.

This sequence belongs to the AccD/PCCB family. As to quaternary structure, acetyl-CoA carboxylase is a heterohexamer composed of biotin carboxyl carrier protein (AccB), biotin carboxylase (AccC) and two subunits each of ACCase subunit alpha (AccA) and ACCase subunit beta (AccD). Zn(2+) serves as cofactor.

The protein localises to the cytoplasm. The catalysed reaction is N(6)-carboxybiotinyl-L-lysyl-[protein] + acetyl-CoA = N(6)-biotinyl-L-lysyl-[protein] + malonyl-CoA. It functions in the pathway lipid metabolism; malonyl-CoA biosynthesis; malonyl-CoA from acetyl-CoA: step 1/1. Component of the acetyl coenzyme A carboxylase (ACC) complex. Biotin carboxylase (BC) catalyzes the carboxylation of biotin on its carrier protein (BCCP) and then the CO(2) group is transferred by the transcarboxylase to acetyl-CoA to form malonyl-CoA. The chain is Acetyl-coenzyme A carboxylase carboxyl transferase subunit beta from Halalkalibacterium halodurans (strain ATCC BAA-125 / DSM 18197 / FERM 7344 / JCM 9153 / C-125) (Bacillus halodurans).